A 1101-amino-acid chain; its full sequence is Furin-like protease 1, isoform 1-CRR (1101 aa).

The disordered stretch occupies residues 1–57 (MKNDVVRWSRQPTSNTTNSSSSSRSDSNSTHKHRSKSNKLNARQLGSNAARSCQQRS). A compositionally biased stretch (low complexity) spans 13–28 (TSNTTNSSSSSRSDSN). N15, N18, and N28 each carry an N-linked (GlcNAc...) asparagine glycan. Residues 38–57 (NKLNARQLGSNAARSCQQRS) are compositionally biased toward polar residues. N108 carries N-linked (GlcNAc...) asparagine glycosylation. Residues 119–139 (VFLLALQFSAVVFLCNINVGF) traverse the membrane as a helical segment. Over residues 150–163 (SAGGSSPAAPSSAP) the composition is skewed to low complexity. The disordered stretch occupies residues 150–187 (SAGGSSPAAPSSAPSSPPTVAVPPPPPPSSALKVDPNG). Residues 164-178 (SSPPTVAVPPPPPPS) show a composition bias toward pro residues. N333 is a glycosylation site (N-linked (GlcNAc...) asparagine). Residues 340 to 654 (MWYLNRGGGL…YGLMDAAEMV (315 aa)) form the Peptidase S8 domain. Residues D372 and H413 each act as charge relay system in the active site. N426 carries N-linked (GlcNAc...) asparagine glycosylation. Intrachain disulfides connect C430–C579 and C522–C552. Residue S587 is the Charge relay system of the active site. An N-linked (GlcNAc...) asparagine glycan is attached at N606. The P/Homo B domain occupies 662–791 (AVPEQQRCEI…DMIFYGTETP (130 aa)). C669 and C695 are oxidised to a cystine. N-linked (GlcNAc...) asparagine glycosylation is found at N727 and N859. Positions 886–915 (EEDEQDDEVTRGPVNPYSSSPMDHSLLMSN) are disordered. The segment covering 901 to 915 (PYSSSPMDHSLLMSN) has biased composition (polar residues). N-linked (GlcNAc...) asparagine glycosylation is present at N978. Residues 1014-1034 (TVLLLVSVIFTLMGVAVAGGI) traverse the membrane as a helical segment.

The protein belongs to the peptidase S8 family. Furin subfamily. Requires Ca(2+) as cofactor. In adults, isoform 1-CRR is expressed in CNS, fat body, and female reproductive tissues, and in embryos, in anal pads, hindgut, developing antennomaxillary complex, oenocytes, clipeolabrum, pharynx, trachea, CNS and developing posterior spiracles.

It is found in the golgi apparatus membrane. It carries out the reaction Release of mature proteins from their proproteins by cleavage of -Arg-Xaa-Yaa-Arg-|-Zaa- bonds, where Xaa can be any amino acid and Yaa is Arg or Lys. Releases albumin, complement component C3 and von Willebrand factor from their respective precursors.. Its function is as follows. Furin is likely to represent the ubiquitous endoprotease activity within constitutive secretory pathways and capable of cleavage at the RX(K/R)R consensus motif. The protein is Furin-like protease 1, isoform 1-CRR (Fur1) of Drosophila melanogaster (Fruit fly).